Consider the following 498-residue polypeptide: Ulvan-active sulfatase (498 aa).

An N-terminal signal peptide occupies residues 1 to 22; sequence MNSKKTGVIILGCIAFLHIACS. 5 residues coordinate Ca(2+): Asp55, Asp56, Cys95, Asp266, and His267. Cys95 acts as the Nucleophile in catalysis. 3-oxoalanine (Cys) is present on Cys95.

Belongs to the sulfatase family. It depends on Ca(2+) as a cofactor. The conversion to 3-oxoalanine (also known as C-formylglycine, FGly), of a serine or cysteine residue in prokaryotes and of a cysteine residue in eukaryotes, is critical for catalytic activity. This post-translational modification is severely defective in multiple sulfatase deficiency (MSD).

The protein resides in the periplasm. Functionally, sulfatase involved in ulvan degradation. Ulvan is the main polysaccharide component of the Ulvales (green seaweed) cell wall. It is composed of disaccharide building blocks comprising 3-sulfated rhamnose (Rha3S) linked to D-glucuronic acid (GlcA), L-iduronic acid (IduA), or D-xylose (Xyl). The protein is Ulvan-active sulfatase of Formosa agariphila (strain DSM 15362 / KCTC 12365 / LMG 23005 / KMM 3901 / M-2Alg 35-1).